Reading from the N-terminus, the 446-residue chain is C4-dicarboxylate transport protein (446 aa).

9 helical membrane passes run 25–45 (VQVL…PAIG), 58–78 (LVKM…IASI), 93–113 (FAYF…VANV), 159–179 (ALTE…GLAL), 199–219 (VFFG…FGAM), 236–256 (LLIA…LGAV), 322–342 (IYMT…LSLG), 370–390 (AATL…ILGI), and 400–420 (LTNF…EKGL).

The protein belongs to the dicarboxylate/amino acid:cation symporter (DAACS) (TC 2.A.23) family.

Its subcellular location is the cell inner membrane. In terms of biological role, responsible for the transport of dicarboxylates such as succinate, fumarate, and malate from the periplasm across the membrane. This chain is C4-dicarboxylate transport protein, found in Sphingopyxis alaskensis (strain DSM 13593 / LMG 18877 / RB2256) (Sphingomonas alaskensis).